A 200-amino-acid polypeptide reads, in one-letter code: MGNLFGRKRRSRVTEQDKAVLQLKQQRDKLRQYQKRISLGLERERELARQLLKEGKKEKAMLLLKKKRYQEQLLDKTDNQISNLERMVQDIEFTQIEMKVIEGLKIGNECLNKMHQVMSIEEVERIIGETQDAVEYQRQIDEILAGSLTEEDEDAILEELNAITQEQLELPDVPSEPLPEEPPEATPVKNRPKPELVAAS.

Glycine 2 is lipidated: N-myristoyl glycine. The stretch at 10 to 94 forms a coiled coil; it reads RSRVTEQDKA…ERMVQDIEFT (85 aa). The Type-2 MIT-interacting motif motif lies at 168 to 179; the sequence is LELPDVPSEPLP. The tract at residues 169-200 is disordered; sequence ELPDVPSEPLPEEPPEATPVKNRPKPELVAAS.

Belongs to the SNF7 family. In terms of assembly, probable core component of the endosomal sorting required for transport complex III (ESCRT-III). ESCRT-III components are thought to multimerize to form a flat lattice on the perimeter membrane of the endosome.

It localises to the endomembrane system. It is found in the late endosome membrane. Probable core component of the endosomal sorting required for transport complex III (ESCRT-III) which is involved in multivesicular bodies (MVBs) formation and sorting of endosomal cargo proteins into MVBs. MVBs contain intraluminal vesicles (ILVs) that are generated by invagination and scission from the limiting membrane of the endosome and mostly are delivered to lysosomes enabling degradation of membrane proteins, such as stimulated growth factor receptors, lysosomal enzymes and lipids. In the ESCRT-III complex, it probably serves as an acceptor for the ESCRT-II complex on endosomal membranes. The polypeptide is Charged multivesicular body protein 6 (CHMP6) (Gallus gallus (Chicken)).